Here is an 802-residue protein sequence, read N- to C-terminus: Mitochondrial inner membrane m-AAA protease component AFG3L2 (802 aa).

Residues 1-38 (MAHRCLLLWSRGGCRRGLPPLLVPRGCLGPDRRPCLRT) constitute a mitochondrion transit peptide. Residues 39-66 (LYQYATVQTASSRRSLLRDVIAAYQRFC) constitute a propeptide, removed in mature form. The segment at 76 to 124 (YFPNGKNGKKASEPKEAVGEKKEPQPSGPQPSGGAGGGGGKRRGKKEDS) is disordered. Positions 85-99 (KASEPKEAVGEKKEP) are enriched in basic and acidic residues. Position 116 is an N6-succinyllysine (K116). 2 helical membrane passes run 142–162 (FRMYFLWTALFWGGVMIYFVF) and 250–270 (GSFLLSMLPTVLIIAFLLYTI). V309, A310, T351, G352, K353, T354, L355, and H489 together coordinate ATP. H573 is a binding site for Zn(2+). E574 is an active-site residue. Zn(2+) contacts are provided by H577 and D648. The disordered stretch occupies residues 759–802 (VEGTGSLDEDTSLPEGLQDWNKEREKEEKKEKEKEEPLNEKVVS). Over residues 778 to 802 (WNKEREKEEKKEKEKEEPLNEKVVS) the composition is skewed to basic and acidic residues.

It in the N-terminal section; belongs to the AAA ATPase family. The protein in the C-terminal section; belongs to the peptidase M41 family. Homohexamer. Forms heterohexamers with SPG7 and AFG3L1. The m-AAA protease is either composed of homohexamers of AFG3L2 or heterohexamers of AFG3L1, AFG3L2 and/or SPG7. Interacts with MAIP1. Interacts with DNAJC19. Interacts with PHB2. Zn(2+) is required as a cofactor. Upon import into the mitochondrion, the N-terminal transit peptide is cleaved to generate an intermediate form which undergoes autocatalytic proteolytic processing to generate the proteolytically active mature form. As to expression, highly expressed in the cerebellar Purkinje cells.

It is found in the mitochondrion inner membrane. The catalysed reaction is ATP + H2O = ADP + phosphate + H(+). Its function is as follows. Catalytic component of the m-AAA protease, a protease that plays a key role in proteostasis of inner mitochondrial membrane proteins, and which is essential for axonal and neuron development. AFG3L2 possesses both ATPase and protease activities: the ATPase activity is required to unfold substrates, threading them into the internal proteolytic cavity for hydrolysis into small peptide fragments. The m-AAA protease carries out protein quality control in the inner membrane of the mitochondria by mediating degradation of mistranslated or misfolded polypeptides. The m-AAA protease complex also promotes the processing and maturation of mitochondrial proteins, such as MRPL32/bL32m, PINK1 and SP7. Mediates protein maturation of the mitochondrial ribosomal subunit MRPL32/bL32m by catalyzing the cleavage of the presequence of MRPL32/bL32m prior to assembly into the mitochondrial ribosome. Required for SPG7 maturation into its active mature form after SPG7 cleavage by mitochondrial-processing peptidase (MPP). Required for the maturation of PINK1 into its 52kDa mature form after its cleavage by mitochondrial-processing peptidase (MPP). Acts as a regulator of calcium in neurons by mediating degradation of SMDT1/EMRE before its assembly with the uniporter complex, limiting the availability of SMDT1/EMRE for MCU assembly and promoting efficient assembly of gatekeeper subunits with MCU. Promotes the proteolytic degradation of GHITM upon hyperpolarization of mitochondria: progressive GHITM degradation leads to respiratory complex I degradation and broad reshaping of the mitochondrial proteome by AFG3L2. Also acts as a regulator of mitochondrial glutathione homeostasis by mediating cleavage and degradation of SLC25A39. SLC25A39 cleavage is prevented when SLC25A39 binds iron-sulfur. Involved in the regulation of OMA1-dependent processing of OPA1. May act by mediating processing of OMA1 precursor, participating in OMA1 maturation. This Mus musculus (Mouse) protein is Mitochondrial inner membrane m-AAA protease component AFG3L2.